The chain runs to 428 residues: Serine--tRNA ligase (428 aa).

231 to 233 (TSE) contacts L-serine. ATP is bound by residues 262 to 264 (RRE) and V278. Residue E285 coordinates L-serine. An ATP-binding site is contributed by 349-352 (ELTS). An L-serine-binding site is contributed by T384.

Belongs to the class-II aminoacyl-tRNA synthetase family. Type-1 seryl-tRNA synthetase subfamily. Homodimer. The tRNA molecule binds across the dimer.

It is found in the cytoplasm. The catalysed reaction is tRNA(Ser) + L-serine + ATP = L-seryl-tRNA(Ser) + AMP + diphosphate + H(+). The enzyme catalyses tRNA(Sec) + L-serine + ATP = L-seryl-tRNA(Sec) + AMP + diphosphate + H(+). The protein operates within aminoacyl-tRNA biosynthesis; selenocysteinyl-tRNA(Sec) biosynthesis; L-seryl-tRNA(Sec) from L-serine and tRNA(Sec): step 1/1. Catalyzes the attachment of serine to tRNA(Ser). Is also able to aminoacylate tRNA(Sec) with serine, to form the misacylated tRNA L-seryl-tRNA(Sec), which will be further converted into selenocysteinyl-tRNA(Sec). In Bifidobacterium longum (strain DJO10A), this protein is Serine--tRNA ligase.